We begin with the raw amino-acid sequence, 851 residues long: Alanine--tRNA ligase (851 aa).

The Zn(2+) site is built by His-554, His-558, Cys-656, and His-660.

This sequence belongs to the class-II aminoacyl-tRNA synthetase family. Requires Zn(2+) as cofactor.

The protein resides in the cytoplasm. The catalysed reaction is tRNA(Ala) + L-alanine + ATP = L-alanyl-tRNA(Ala) + AMP + diphosphate. Functionally, catalyzes the attachment of alanine to tRNA(Ala) in a two-step reaction: alanine is first activated by ATP to form Ala-AMP and then transferred to the acceptor end of tRNA(Ala). Also edits incorrectly charged Ser-tRNA(Ala) and Gly-tRNA(Ala) via its editing domain. This Aliarcobacter butzleri (strain RM4018) (Arcobacter butzleri) protein is Alanine--tRNA ligase.